The chain runs to 375 residues: Fluoride export protein 1 (375 aa).

The Cytoplasmic segment spans residues 1–11; sequence MIFNPVISNHK. Residues 12–32 form a helical membrane-spanning segment; the sequence is LSHYIHVFCTFTTFCILGTET. Residues 33 to 34 are Extracellular-facing; sequence RQ. Residues 35 to 55 traverse the membrane as a helical segment; sequence AITALSTYTPAFVTAPTVLWS. Residues 56 to 79 are Cytoplasmic-facing; the sequence is NCSSCMLMGIMQSLNAYTWMKDHQ. The helical transmembrane segment at 80–100 threads the bilayer; the sequence is VLFLGVTTGYCGALSSFSSML. Residues 101 to 127 are Extracellular-facing; the sequence is LEMFEHSTNLTNGNIANHTKLPNRAYG. N-linked (GlcNAc...) asparagine glycosylation is found at Asn-109 and Asn-117. The chain crosses the membrane as a helical span at residues 128–148; it reads IMEFLSVLLVHLMVSMGSLIF. Residues 149-213 lie on the Cytoplasmic side of the membrane; it reads GRQLGKEVIV…FKKFFDIVDK (65 aa). The chain crosses the membrane as a helical span at residues 214-234; the sequence is LAYALAFPLIILFVVLCAYYE. N-linked (GlcNAc...) asparagine glycosylation occurs at Asn-235. Topologically, residues 235–241 are extracellular; that stretch reads NYSRGKW. The helical transmembrane segment at 242–262 threads the bilayer; sequence TLPCLFGIFAGFLRYWLAEMF. The Cytoplasmic segment spans residues 263 to 268; sequence NKTNKK. A helical transmembrane segment spans residues 269–289; the sequence is FPLGTFLANVFATLLIGIFTM. Topologically, residues 290–310 are extracellular; that stretch reads VQRGKKHFSTDVPIVNSLNSC. The chain crosses the membrane as a helical span at residues 311–331; sequence HIVSALISGFCGTLSTISTFI. At 332-338 the chain is on the cytoplasmic side; sequence NEGYKLS. A helical transmembrane segment spans residues 339-359; the sequence is FINMLIYYTVSIAISYCLLVI. The Extracellular portion of the chain corresponds to 360-375; that stretch reads TLGSYAWTRGLTNPIC.

This sequence belongs to the fluoride channel Fluc/FEX (TC 1.A.43) family.

It localises to the cell membrane. The enzyme catalyses fluoride(in) = fluoride(out). Fluoride channel required for the rapid expulsion of cytoplasmic fluoride. This is Fluoride export protein 1 from Saccharomyces cerevisiae (strain ATCC 204508 / S288c) (Baker's yeast).